The chain runs to 409 residues: Glycosaminoglycan xylosylkinase (409 aa).

The Cytoplasmic portion of the chain corresponds to 1–6 (MKLKQR). A helical; Signal-anchor for type II membrane protein transmembrane segment spans residues 7-25 (VVLLAILLVIFIFTKVFLI). The Lumenal portion of the chain corresponds to 26–409 (DNLDTSAANR…VEDRMPLSHL (384 aa)). ATP-binding residues include Gln107 and Lys123. Asp142 provides a ligand contact to Mn(2+). An N-linked (GlcNAc...) asparagine glycan is attached at Asn193. Disulfide bonds link Cys196-Cys211 and Cys201-Cys204. ATP is bound at residue 222–225 (TLWL). 2 cysteine pairs are disulfide-bonded: Cys257–Cys331 and Cys332–Cys389. The active site involves Asp289. 2 residues coordinate ATP: Glu294 and Asp309. Residue Asp309 coordinates Mn(2+).

The protein belongs to the FAM20 family. The cofactor is Mn(2+). In terms of tissue distribution, widely expressed. Strongly expressed in pancreas, spleen and fetal liver.

The protein resides in the golgi apparatus membrane. It catalyses the reaction 3-O-(beta-D-galactosyl-(1-&gt;3)-beta-D-galactosyl-(1-&gt;4)-beta-D-xylosyl)-L-seryl-[protein] + ATP = 3-O-(beta-D-galactosyl-(1-&gt;3)-beta-D-galactosyl-(1-&gt;4)-beta-D-2-O-phosphoxylosyl)-L-seryl-[protein] + ADP + H(+). In terms of biological role, responsible for the 2-O-phosphorylation of xylose in the glycosaminoglycan-protein linkage region of proteoglycans thereby regulating the amount of mature GAG chains. Sulfated glycosaminoglycans (GAGs), including heparan sulfate and chondroitin sulfate, are synthesized on the so-called common GAG-protein linkage region (GlcUAbeta1-3Galbeta1-3Galbeta1-4Xylbeta1-O-Ser) of core proteins, which is formed by the stepwise addition of monosaccharide residues by the respective specific glycosyltransferases. Xylose 2-O-phosphorylation may influence the catalytic activity of B3GAT3 (GlcAT-I) which completes the precursor tetrasaccharide of GAG-protein linkage regions on which the repeating disaccharide region is synthesized. In Homo sapiens (Human), this protein is Glycosaminoglycan xylosylkinase.